The primary structure comprises 245 residues: Enolase-phosphatase E1 (245 aa).

It belongs to the HAD-like hydrolase superfamily. MasA/MtnC family. Monomer. The cofactor is Mg(2+).

It catalyses the reaction 5-methylsulfanyl-2,3-dioxopentyl phosphate + H2O = 1,2-dihydroxy-5-(methylsulfanyl)pent-1-en-3-one + phosphate. It functions in the pathway amino-acid biosynthesis; L-methionine biosynthesis via salvage pathway; L-methionine from S-methyl-5-thio-alpha-D-ribose 1-phosphate: step 3/6. Its pathway is amino-acid biosynthesis; L-methionine biosynthesis via salvage pathway; L-methionine from S-methyl-5-thio-alpha-D-ribose 1-phosphate: step 4/6. Bifunctional enzyme that catalyzes the enolization of 2,3-diketo-5-methylthiopentyl-1-phosphate (DK-MTP-1-P) into the intermediate 2-hydroxy-3-keto-5-methylthiopentenyl-1-phosphate (HK-MTPenyl-1-P), which is then dephosphorylated to form the acireductone 1,2-dihydroxy-3-keto-5-methylthiopentene (DHK-MTPene). The protein is Enolase-phosphatase E1 of Prochlorococcus marinus (strain MIT 9313).